Consider the following 161-residue polypeptide: E3 ubiquitin ligase complex SCF subunit sconC (161 aa).

Residues 103–161 form an interaction with the F-box domain of F-box proteins region; sequence ILAANYLDIKGLLDVGCKTVANMIKGKSPEEIRKTFNIQNDFTPEEEDQIRRENEWAEE.

Belongs to the SKP1 family. In terms of assembly, component of the SCF (SKP1-CUL1-F-box protein) E3 ubiquitin ligase complexes.

The protein operates within protein modification; protein ubiquitination. In terms of biological role, essential component of the SCF (SKP1-CUL1-F-box protein) E3 ubiquitin ligase complexes, which mediate the ubiquitination and subsequent proteasomal degradation of target proteins. Controls sulfur metabolite repression, probably by mediating the inactivation or degradation of the metR transcription factor. The polypeptide is E3 ubiquitin ligase complex SCF subunit sconC (sconC) (Aspergillus terreus (strain NIH 2624 / FGSC A1156)).